Consider the following 440-residue polypeptide: UDP-glucose 6-dehydrogenase YwqF (440 aa).

NAD(+) is bound by residues 2 to 19, Val11, Asp30, Lys35, Thr121, and Glu155; that span reads NITV…GVSL. Substrate is bound by residues 151–155, Lys204, Asn208, 249–253, and Gly257; these read EFLRE and FLKAG. Cys260 serves as the catalytic Nucleophile. Lys263 contacts NAD(+). Lys320 lines the substrate pocket. Residue Arg327 participates in NAD(+) binding.

It belongs to the UDP-glucose/GDP-mannose dehydrogenase family. In terms of processing, phosphorylated on tyrosine residue(s). Phosphorylated by YwqD and dephosphorylated by YwqE in vitro.

The protein localises to the cytoplasm. The catalysed reaction is UDP-alpha-D-glucose + 2 NAD(+) + H2O = UDP-alpha-D-glucuronate + 2 NADH + 3 H(+). It functions in the pathway nucleotide-sugar biosynthesis; UDP-alpha-D-glucuronate biosynthesis; UDP-alpha-D-glucuronate from UDP-alpha-D-glucose: step 1/1. Its activity is regulated as follows. Competitively inhibited by UDP-glucose. Activated by phosphorylation, which may increase affinity for NAD(+); inhibited by dephosphorylation. Its function is as follows. Catalyzes the conversion of UDP-glucose into UDP-glucuronate, one of the precursors of teichuronic acid. The chain is UDP-glucose 6-dehydrogenase YwqF (ywqF) from Bacillus subtilis (strain 168).